Reading from the N-terminus, the 524-residue chain is Cytochrome P450 1A1 (524 aa).

Residues 33 to 44 (WQPRLPKGLKSP) form a mitochondrial targeting signal region. The O-linked (GlcNAc) serine glycan is linked to Ser71. Phe228 serves as a coordination point for substrate. Cys461 is a heme binding site.

The protein belongs to the cytochrome P450 family. As to quaternary structure, interacts with cytosolic chaperones HSP70 and HSP90; this interaction is required for initial targeting to mitochondria. Interacts (via mitochondrial targeting signal) with TOMM40 (via N-terminus); this interaction is required for translocation across the mitochondrial outer membrane. The cofactor is heme.

It is found in the endoplasmic reticulum membrane. It localises to the mitochondrion inner membrane. The protein localises to the microsome membrane. The protein resides in the cytoplasm. It catalyses the reaction an organic molecule + reduced [NADPH--hemoprotein reductase] + O2 = an alcohol + oxidized [NADPH--hemoprotein reductase] + H2O + H(+). The catalysed reaction is estrone + reduced [NADPH--hemoprotein reductase] + O2 = 2-hydroxyestrone + oxidized [NADPH--hemoprotein reductase] + H2O + H(+). The enzyme catalyses estrone + reduced [NADPH--hemoprotein reductase] + O2 = 4-hydroxyestrone + oxidized [NADPH--hemoprotein reductase] + H2O + H(+). It carries out the reaction estrone + reduced [NADPH--hemoprotein reductase] + O2 = 6alpha-hydroxyestrone + oxidized [NADPH--hemoprotein reductase] + H2O + H(+). It catalyses the reaction estrone + reduced [NADPH--hemoprotein reductase] + O2 = 15alpha-hydroxyestrone + oxidized [NADPH--hemoprotein reductase] + H2O + H(+). The catalysed reaction is estrone + reduced [NADPH--hemoprotein reductase] + O2 = 16alpha-hydroxyestrone + oxidized [NADPH--hemoprotein reductase] + H2O + H(+). The enzyme catalyses 17beta-estradiol + reduced [NADPH--hemoprotein reductase] + O2 = 2-hydroxy-17beta-estradiol + oxidized [NADPH--hemoprotein reductase] + H2O + H(+). It carries out the reaction 17beta-estradiol + reduced [NADPH--hemoprotein reductase] + O2 = 4-hydroxy-17beta-estradiol + oxidized [NADPH--hemoprotein reductase] + H2O + H(+). It catalyses the reaction 17beta-estradiol + reduced [NADPH--hemoprotein reductase] + O2 = 6alpha-hydroxy-17beta-estradiol + oxidized [NADPH--hemoprotein reductase] + H2O + H(+). The catalysed reaction is 17beta-estradiol + reduced [NADPH--hemoprotein reductase] + O2 = 7alpha-hydroxy-17beta-estradiol + oxidized [NADPH--hemoprotein reductase] + H2O + H(+). The enzyme catalyses 17beta-estradiol + reduced [NADPH--hemoprotein reductase] + O2 = 15alpha-hydroxy-17beta-estradiol + oxidized [NADPH--hemoprotein reductase] + H2O + H(+). It carries out the reaction (5Z,8Z,11Z)-eicosatrienoate + reduced [NADPH--hemoprotein reductase] + O2 = 19-hydroxy-(5Z,8Z,11Z)-eicosatrienoate + oxidized [NADPH--hemoprotein reductase] + H2O + H(+). It catalyses the reaction (5Z,8Z,11Z,14Z)-eicosatetraenoate + reduced [NADPH--hemoprotein reductase] + O2 = 16-hydroxy-(5Z,8Z,11Z,14Z)-eicosatetraenoate + oxidized [NADPH--hemoprotein reductase] + H2O + H(+). The catalysed reaction is (5Z,8Z,11Z,14Z)-eicosatetraenoate + reduced [NADPH--hemoprotein reductase] + O2 = 17-hydroxy-(5Z,8Z,11Z,14Z)-eicosatetraenoate + oxidized [NADPH--hemoprotein reductase] + H2O + H(+). The enzyme catalyses (5Z,8Z,11Z,14Z)-eicosatetraenoate + reduced [NADPH--hemoprotein reductase] + O2 = 18-hydroxy-(5Z,8Z,11Z,14Z)-eicosatetraenoate + oxidized [NADPH--hemoprotein reductase] + H2O + H(+). It carries out the reaction (5Z,8Z,11Z,14Z)-eicosatetraenoate + reduced [NADPH--hemoprotein reductase] + O2 = 19-hydroxy-(5Z,8Z,11Z,14Z)-eicosatetraenoate + oxidized [NADPH--hemoprotein reductase] + H2O + H(+). It catalyses the reaction (5Z,8Z,11Z,14Z,17Z)-eicosapentaenoate + reduced [NADPH--hemoprotein reductase] + O2 = 19-hydroxy-(5Z,8Z,11Z,14Z,17Z)-eicosapentaenoate + oxidized [NADPH--hemoprotein reductase] + H2O + H(+). The catalysed reaction is (5Z,8Z,11Z,14Z)-eicosatetraenoate + reduced [NADPH--hemoprotein reductase] + O2 = (8R,9S)-epoxy-(5Z,11Z,14Z)-eicosatrienoate + oxidized [NADPH--hemoprotein reductase] + H2O + H(+). The enzyme catalyses (5Z,8Z,11Z,14Z)-eicosatetraenoate + reduced [NADPH--hemoprotein reductase] + O2 = (11R,12S)-epoxy-(5Z,8Z,14Z)-eicosatrienoate + oxidized [NADPH--hemoprotein reductase] + H2O + H(+). It carries out the reaction (5Z,8Z,11Z,14Z)-eicosatetraenoate + reduced [NADPH--hemoprotein reductase] + O2 = (14S,15R)-epoxy-(5Z,8Z,11Z)-eicosatrienoate + oxidized [NADPH--hemoprotein reductase] + H2O + H(+). It catalyses the reaction (5Z,8Z,11Z,14Z)-eicosatetraenoate + reduced [NADPH--hemoprotein reductase] + O2 = (14R,15S)-epoxy-(5Z,8Z,11Z)-eicosatrienoate + oxidized [NADPH--hemoprotein reductase] + H2O + H(+). The catalysed reaction is (5Z,8Z,11Z,14Z,17Z)-eicosapentaenoate + reduced [NADPH--hemoprotein reductase] + O2 = (17R,18S)-epoxy-(5Z,8Z,11Z,14Z)-eicosatetraenoate + oxidized [NADPH--hemoprotein reductase] + H2O + H(+). The enzyme catalyses (4Z,7Z,10Z,13Z,16Z,19Z)-docosahexaenoate + reduced [NADPH--hemoprotein reductase] + O2 = (19S,20R)-epoxy-(4Z,7Z,10Z,13Z,16Z)-docosapentaenoate + oxidized [NADPH--hemoprotein reductase] + H2O + H(+). It carries out the reaction (4Z,7Z,10Z,13Z,16Z,19Z)-docosahexaenoate + reduced [NADPH--hemoprotein reductase] + O2 = (19R,20S)-epoxy-(4Z,7Z,10Z,13Z,16Z)-docosapentaenoate + oxidized [NADPH--hemoprotein reductase] + H2O + H(+). It catalyses the reaction all-trans-retinol + reduced [NADPH--hemoprotein reductase] + O2 = all-trans-retinal + oxidized [NADPH--hemoprotein reductase] + 2 H2O + H(+). The catalysed reaction is all-trans-retinal + reduced [NADPH--hemoprotein reductase] + O2 = all-trans-retinoate + oxidized [NADPH--hemoprotein reductase] + H2O + 2 H(+). The enzyme catalyses (13S)-hydroperoxy-(9Z,11E)-octadecadienoate = 13-oxo-(9Z,11E)-octadecadienoate + H2O. It carries out the reaction (12S)-hydroperoxy-(5Z,8Z,10E,14Z)-eicosatetraenoate = 12-oxo-(5Z,8Z,10E,14Z)-eicosatetraenoate + H2O. It catalyses the reaction (15S)-hydroperoxy-(5Z,8Z,11Z,13E)-eicosatetraenoate = 15-oxo-(5Z,8Z,11Z,13E)-eicosatetraenoate + H2O. The catalysed reaction is (5S)-hydroperoxy-(6E,8Z,11Z,14Z)-eicosatetraenoate = 5-oxo-(6E,8Z,11Z,14Z)-eicosatetraenoate + H2O. It participates in steroid hormone biosynthesis. It functions in the pathway lipid metabolism; fatty acid metabolism. Its pathway is cofactor metabolism; retinol metabolism. A cytochrome P450 monooxygenase involved in the metabolism of various endogenous substrates, including fatty acids, steroid hormones and vitamins. Mechanistically, uses molecular oxygen inserting one oxygen atom into a substrate, and reducing the second into a water molecule, with two electrons provided by NADPH via cytochrome P450 reductase (CPR; NADPH-ferrihemoprotein reductase). Catalyzes the hydroxylation of carbon-hydrogen bonds. Exhibits high catalytic activity for the formation of hydroxyestrogens from estrone (E1) and 17beta-estradiol (E2), namely 2-hydroxy E1 and E2, as well as D-ring hydroxylated E1 and E2 at the C15alpha and C16alpha positions. Displays different regioselectivities for polyunsaturated fatty acids (PUFA) hydroxylation. Catalyzes the epoxidation of double bonds of certain PUFA. Converts arachidonic acid toward epoxyeicosatrienoic acid (EET) regioisomers, 8,9-, 11,12-, and 14,15-EET, that function as lipid mediators in the vascular system. Displays an absolute stereoselectivity in the epoxidation of eicosapentaenoic acid (EPA) producing the 17(R),18(S) enantiomer. May play an important role in all-trans retinoic acid biosynthesis in extrahepatic tissues. Catalyzes two successive oxidative transformation of all-trans retinol to all-trans retinal and then to the active form all-trans retinoic acid. May also participate in eicosanoids metabolism by converting hydroperoxide species into oxo metabolites (lipoxygenase-like reaction, NADPH-independent). This Canis lupus familiaris (Dog) protein is Cytochrome P450 1A1 (CYP1A1).